The primary structure comprises 388 residues: MSEDRTGHQGISGPATRAIHAGYRPDPATGAVNVPIYASSTFAQDGVGGLRGGFEYARTGNPTRAALEASLAAVEEGAFARAFSSGMAATDCALRAMLRPGDHVVIPDDAYGGTFRLIDKVFTRWDVQYTPVRLADLDAVGAAITPRTRLIWVETPTNPLLSIADITAIAELGTDRSAKVLVDNTFASPALQQPLRLGADVVLHSTTKYIGGHSDVVGGALVTNDEELDEEFAFLQNGAGAVPGPFDAYLTMRGLKTLVLRMQRHSENACAVAEFLADHPSVSSVLYPGLPSHPGHEIAARQMRGFGGMVSVRMRAGRRAAQDLCAKTRVFILAESLGGVESLIEHPSAMTHASTAGSQLEVPDDLVRLSVGIEDIADLLGDLEQALG.

Residues 1–24 (MSEDRTGHQGISGPATRAIHAGYR) form a disordered region. Lys208 bears the N6-(pyridoxal phosphate)lysine mark.

It belongs to the trans-sulfuration enzymes family. In terms of assembly, homotetramer. Pyridoxal 5'-phosphate serves as cofactor.

The protein resides in the cytoplasm. The enzyme catalyses O-succinyl-L-homoserine + L-cysteine = L,L-cystathionine + succinate + H(+). In terms of biological role, catalyzes the formation of L-cystathionine from O-succinyl-L-homoserine (OSHS) and L-cysteine, via a gamma-replacement reaction. In the absence of thiol, catalyzes gamma-elimination to form 2-oxobutanoate, succinate and ammonia. This chain is Cystathionine gamma-synthase (metB), found in Mycobacterium bovis (strain ATCC BAA-935 / AF2122/97).